We begin with the raw amino-acid sequence, 246 residues long: V-type proton ATPase subunit D 1 (246 aa).

Belongs to the V-ATPase D subunit family. In terms of assembly, V-ATPase is a heteromultimeric enzyme made up of two complexes: the ATP-hydrolytic V1 complex and the proton translocation V0 complex. The V1 complex consists of three catalytic AB heterodimers that form a heterohexamer, three peripheral stalks each consisting of EG heterodimers, one central rotor including subunits D and F, and the regulatory subunits C and H. The proton translocation complex V0 consists of the proton transport subunit a, a ring of proteolipid subunits c9c'', rotary subunit d, subunits e and f, and the accessory subunits VhaAC45 and ATP6AP2.

Subunit of the V1 complex of vacuolar(H+)-ATPase (V-ATPase), a multisubunit enzyme composed of a peripheral complex (V1) that hydrolyzes ATP and a membrane integral complex (V0) that translocates protons. V-ATPase is responsible for acidifying and maintaining the pH of intracellular compartments and in some cell types, is targeted to the plasma membrane, where it is responsible for acidifying the extracellular environment. The sequence is that of V-type proton ATPase subunit D 1 (Vha36-1) from Drosophila melanogaster (Fruit fly).